The primary structure comprises 143 residues: Large ribosomal subunit protein uL11 (143 aa).

The protein belongs to the universal ribosomal protein uL11 family. In terms of assembly, part of the ribosomal stalk of the 50S ribosomal subunit. Interacts with L10 and the large rRNA to form the base of the stalk. L10 forms an elongated spine to which L12 dimers bind in a sequential fashion forming a multimeric L10(L12)X complex. In terms of processing, one or more lysine residues are methylated.

In terms of biological role, forms part of the ribosomal stalk which helps the ribosome interact with GTP-bound translation factors. In Pseudomonas paraeruginosa (strain DSM 24068 / PA7) (Pseudomonas aeruginosa (strain PA7)), this protein is Large ribosomal subunit protein uL11.